The sequence spans 264 residues: Pyridoxine 5'-phosphate synthase (264 aa).

Over residues 1–21 (MTDTAQILPTTLEQNPQNTSK) the composition is skewed to polar residues. Residues 1–22 (MTDTAQILPTTLEQNPQNTSKK) form a disordered region. 3-amino-2-oxopropyl phosphate is bound at residue N28. 1-deoxy-D-xylulose 5-phosphate is bound at residue 30–31 (DH). Position 39 (R39) interacts with 3-amino-2-oxopropyl phosphate. H64 functions as the Proton acceptor in the catalytic mechanism. R66 and H71 together coordinate 1-deoxy-D-xylulose 5-phosphate. The Proton acceptor role is filled by E91. T121 lines the 1-deoxy-D-xylulose 5-phosphate pocket. Catalysis depends on H217, which acts as the Proton donor. 3-amino-2-oxopropyl phosphate contacts are provided by residues G218 and 239–240 (GH).

Belongs to the PNP synthase family. Homooctamer; tetramer of dimers.

The protein resides in the cytoplasm. The catalysed reaction is 3-amino-2-oxopropyl phosphate + 1-deoxy-D-xylulose 5-phosphate = pyridoxine 5'-phosphate + phosphate + 2 H2O + H(+). Its pathway is cofactor biosynthesis; pyridoxine 5'-phosphate biosynthesis; pyridoxine 5'-phosphate from D-erythrose 4-phosphate: step 5/5. Catalyzes the complicated ring closure reaction between the two acyclic compounds 1-deoxy-D-xylulose-5-phosphate (DXP) and 3-amino-2-oxopropyl phosphate (1-amino-acetone-3-phosphate or AAP) to form pyridoxine 5'-phosphate (PNP) and inorganic phosphate. In Psychrobacter cryohalolentis (strain ATCC BAA-1226 / DSM 17306 / VKM B-2378 / K5), this protein is Pyridoxine 5'-phosphate synthase.